Here is a 96-residue protein sequence, read N- to C-terminus: Small ribosomal subunit protein bS20 (96 aa).

This sequence belongs to the bacterial ribosomal protein bS20 family.

In terms of biological role, binds directly to 16S ribosomal RNA. The protein is Small ribosomal subunit protein bS20 of Anaplasma marginale (strain St. Maries).